A 132-amino-acid chain; its full sequence is Agouti-signaling protein (132 aa).

The first 22 residues, 1–22 (MDVTRLVLATLLVFLCFFAAYS), serve as a signal peptide directing secretion. The N-linked (GlcNAc...) asparagine glycan is linked to Asn39. The segment at 60–93 (KKISRKEAEKRRSSKKEASKQKVARPRTPLSVPC) is disordered. The segment covering 64–79 (RKEAEKRRSSKKEASK) has biased composition (basic and acidic residues). Disulfide bonds link Cys93–Cys108, Cys100–Cys114, Cys107–Cys125, Cys111–Cys132, and Cys116–Cys123. One can recognise an Agouti domain in the interval 93-132 (CVSTRGSCKPPAPACCHPCASCQCRFFRSACSCRVLNVNC).

The protein localises to the secreted. Functionally, involved in the regulation of melanogenesis. The binding of ASP to MC1R precludes alpha-MSH initiated signaling and thus blocks production of cAMP, leading to a down-regulation of eumelanogenesis (brown/black pigment) and thus increasing synthesis of pheomelanin (yellow/red pigment). The chain is Agouti-signaling protein (ASIP) from Cebuella pygmaea (Pygmy marmoset).